A 160-amino-acid polypeptide reads, in one-letter code: MLLLLLGILFLHIAVLVLLFVSTIVSQWLVGNGHRTDLWQNCTTSALGAVQHCYSSSVSEWLQSVQATMILSVIFSVLSLFLFFCQLFTLTKGGRFYITGVFQILAGLCVMSAAAIYTVRHSEWHVNNDYSYGFAYILAWVAFPLALLSGIIYVILRKRE.

A topological domain (cytoplasmic) is located at residue Met1. Residues 2-31 (LLLLLGILFLHIAVLVLLFVSTIVSQWLVG) traverse the membrane as a helical segment. The Extracellular segment spans residues 32 to 64 (NGHRTDLWQNCTTSALGAVQHCYSSSVSEWLQS). N-linked (GlcNAc...) asparagine glycosylation occurs at Asn41. A helical transmembrane segment spans residues 65 to 91 (VQATMILSVIFSVLSLFLFFCQLFTLT). Topologically, residues 92-95 (KGGR) are cytoplasmic. The helical transmembrane segment at 96-119 (FYITGVFQILAGLCVMSAAAIYTV) threads the bilayer. At 120 to 133 (RHSEWHVNNDYSYG) the chain is on the extracellular side. Residues 134 to 156 (FAYILAWVAFPLALLSGIIYVIL) form a helical membrane-spanning segment. Residues 157–160 (RKRE) are Cytoplasmic-facing.

This sequence belongs to the PMP-22/EMP/MP20 family. In terms of processing, ubiquitinated by the DCX(DCAF13) E3 ubiquitin ligase complex, leading to its degradation. In terms of tissue distribution, found exclusively in the peripheral nervous system. Present in both myelinating and nonmyelinating Schwann cells. Found in the tumors of Schwann cell lineage where axons are present (neurofibromas) but not where axons are absent (schwannomas).

The protein resides in the cell membrane. Might be involved in growth regulation, and in myelinization in the peripheral nervous system. The chain is Peripheral myelin protein 22 (Pmp22) from Rattus norvegicus (Rat).